Consider the following 85-residue polypeptide: Turripeptide PaIAa (85 aa).

It belongs to the turripeptide family. As to expression, expressed by the venom duct.

Its subcellular location is the secreted. Its function is as follows. Is lethal to drosophila larvae. This is Turripeptide PaIAa from Polystira albida (White giant-turris).